Here is a 358-residue protein sequence, read N- to C-terminus: Fructose-bisphosphate aldolase 6, cytosolic (358 aa).

S2 bears the N-acetylserine mark. Residue R39 coordinates substrate. An S-glutathionyl cysteine; transient modification is found at C68. Position 173 is an S-glutathionyl cysteine; transient; alternate (C173). C173 is subject to S-nitrosocysteine; transient; alternate. Catalysis depends on E183, which acts as the Proton acceptor. The Schiff-base intermediate with dihydroxyacetone-P role is filled by K225. Residues 266–268 and R298 each bind substrate; that span reads SGG. Position 350 is a phosphoserine (S350). N6,N6,N6-trimethyllysine is present on K354.

Belongs to the class I fructose-bisphosphate aldolase family. Homotetramer. Interacts with TRX1 and TRX3. Interacts with GAPC1 and VDAC3. S-glutathionylated at Cys-68 and Cys-173. Post-translationally, S-nitrosylated at Cys-173. As to expression, expressed in roots, rosettes leaves, cauline leaves, stems and flowers.

It is found in the cytoplasm. Its subcellular location is the cytosol. It localises to the nucleus. The protein localises to the mitochondrion. The catalysed reaction is beta-D-fructose 1,6-bisphosphate = D-glyceraldehyde 3-phosphate + dihydroxyacetone phosphate. It functions in the pathway carbohydrate degradation; glycolysis; D-glyceraldehyde 3-phosphate and glycerone phosphate from D-glucose: step 4/4. Its activity is regulated as follows. Total and irreversible inhibition by S-nitrosoglutathione (GSNO). Partial and reversible inhibition by oxidized glutathione (GSSG). Functionally, fructose-bisphosphate aldolase that plays a key role in glycolysis and gluconeogenesis. Associates with GAPC1 to the outer mitochondrial membrane, in a redox-dependent manner, leading to binding and bundling of actin. Actin binding and bundling occurs under oxidizing conditions and is reversible under reducing conditions. May be part of a redox-dependent retrograde signal transduction network for adaptation upon oxidative stress. In Arabidopsis thaliana (Mouse-ear cress), this protein is Fructose-bisphosphate aldolase 6, cytosolic.